A 156-amino-acid polypeptide reads, in one-letter code: Ribosome maturation factor RimP (156 aa).

Belongs to the RimP family.

The protein localises to the cytoplasm. Its function is as follows. Required for maturation of 30S ribosomal subunits. The protein is Ribosome maturation factor RimP of Bacillus mycoides (strain KBAB4) (Bacillus weihenstephanensis).